The chain runs to 519 residues: Cilia- and flagella-associated protein 157 (519 aa).

The span at 1-11 shows a compositional bias: basic residues; it reads MPPKKKGKRGP. The interval 1-25 is disordered; sequence MPPKKKGKRGPSAKTKEKETVRVAS. Coiled coils occupy residues 28 to 185 and 241 to 356; these read VTEQ…EKKV and IELI…QRTL.

The protein belongs to the CFAP157 family.

Its subcellular location is the cytoplasm. It localises to the cytoskeleton. It is found in the cilium basal body. In terms of biological role, specifically required during spermatogenesis for flagellum morphogenesis and sperm motility. This chain is Cilia- and flagella-associated protein 157, found in Xenopus tropicalis (Western clawed frog).